We begin with the raw amino-acid sequence, 516 residues long: uncharacterized protein (516 aa).

The uDENN domain maps to 31-185; the sequence is ACIFLSKFDM…LDKFDIFEKF (155 aa). The 155-residue stretch at 211–365 folds into the cDENN domain; it reads HLVEYLPYWT…LEVYEKLILG (155 aa). Positions 367 to 513 constitute a dDENN domain; it reads LQEDASTNAT…DISNLPECLG (147 aa). S-palmitoyl cysteine attachment occurs at residues Cys511 and Cys516.

Post-translationally, palmitoylated by AKR1.

The protein resides in the lipid droplet. Functionally, may be involved in lipid metabolism. This is an uncharacterized protein from Saccharomyces cerevisiae (strain ATCC 204508 / S288c) (Baker's yeast).